The sequence spans 458 residues: Forkhead box protein J1-A (458 aa).

The segment covering Thr68–Ser78 has biased composition (polar residues). Residues Thr68–Met99 form a disordered region. The segment at residues Lys142 to Leu236 is a DNA-binding region (fork-head). Positions Thr305–Arg321 are enriched in basic residues. Positions Thr305–Ser324 are disordered.

It belongs to the FOXJ1 family. As to expression, expressed in floor plate, dorsal forerunner cells, Kupffers vesicle, the floor plate, pronephric ducts and kidney.

The protein resides in the nucleus. Functionally, key transcription factor required for motile ciliogenesis. Activates genes essential for motile cilia formation and function. Its activity is sufficient for ectopic development of cilia that resemble motile cilia. This is Forkhead box protein J1-A from Danio rerio (Zebrafish).